The primary structure comprises 47 residues: Large ribosomal subunit protein bL34 (47 aa).

2 stretches are compositionally biased toward basic residues: residues 1 to 22 and 36 to 47; these read MAKG…HGFR and ARRRKGRKSLTA. The interval 1 to 47 is disordered; the sequence is MAKGKRTFQPNNRRRSRVHGFRSRMSTRAGRAIVSARRRKGRKSLTA.

This sequence belongs to the bacterial ribosomal protein bL34 family.

In Corynebacterium kroppenstedtii (strain DSM 44385 / JCM 11950 / CIP 105744 / CCUG 35717), this protein is Large ribosomal subunit protein bL34.